The following is a 180-amino-acid chain: Acireductone dioxygenase (180 aa).

Fe(2+)-binding residues include histidine 97, histidine 99, glutamate 103, and histidine 141. Ni(2+)-binding residues include histidine 97, histidine 99, glutamate 103, and histidine 141.

The protein belongs to the acireductone dioxygenase (ARD) family. Monomer. Fe(2+) is required as a cofactor. It depends on Ni(2+) as a cofactor.

It catalyses the reaction 1,2-dihydroxy-5-(methylsulfanyl)pent-1-en-3-one + O2 = 3-(methylsulfanyl)propanoate + CO + formate + 2 H(+). The catalysed reaction is 1,2-dihydroxy-5-(methylsulfanyl)pent-1-en-3-one + O2 = 4-methylsulfanyl-2-oxobutanoate + formate + 2 H(+). The protein operates within amino-acid biosynthesis; L-methionine biosynthesis via salvage pathway; L-methionine from S-methyl-5-thio-alpha-D-ribose 1-phosphate: step 5/6. Its function is as follows. Catalyzes 2 different reactions between oxygen and the acireductone 1,2-dihydroxy-3-keto-5-methylthiopentene (DHK-MTPene) depending upon the metal bound in the active site. Fe-containing acireductone dioxygenase (Fe-ARD) produces formate and 2-keto-4-methylthiobutyrate (KMTB), the alpha-ketoacid precursor of methionine in the methionine recycle pathway. Ni-containing acireductone dioxygenase (Ni-ARD) produces methylthiopropionate, carbon monoxide and formate, and does not lie on the methionine recycle pathway. The chain is Acireductone dioxygenase from Klebsiella pneumoniae subsp. pneumoniae (strain ATCC 700721 / MGH 78578).